We begin with the raw amino-acid sequence, 1113 residues long: Protein KIBRA (1113 aa).

2 consecutive WW domains span residues 6–39 (LPLPEGWEEARDFDGKVYYIDHTNRTTSWIDPRD) and 53–86 (DELPLGWEEAYDPQVGDYFIDHNTKTTQIEDPRV). Coiled-coil stretches lie at residues 107 to 193 (LSAQ…RGFQ) and 293 to 431 (NSNN…SSMQ). A Phosphoserine modification is found at Ser141. Disordered regions lie at residues 429-448 (SMQSLSSGSSPGSLTSSRGS) and 522-547 (RSLSGTPKSMTSLSPRSSLSSPSPPC). The span at 522-532 (RSLSGTPKSMT) shows a compositional bias: polar residues. Low complexity predominate over residues 533–542 (SLSPRSSLSS). Ser535 is subject to Phosphoserine. At Ser542 the chain carries Phosphoserine; by CDK1. In terms of domain architecture, C2 spans 658–781 (GATRIQIALK…RSGERSTRWY (124 aa)). The disordered stretch occupies residues 825–975 (LEKRQEGRSS…RSVRMKRPSS (151 aa)). The interval 839–1113 (EDSWRYEETS…NIPALSADDV (275 aa)) is interaction with histone H3. Residues 847–870 (TSENEAVAEEEEEEVEEEEGEEDV) are compositionally biased toward acidic residues. At Ser899 the chain carries Phosphoserine. Thr912 carries the phosphothreonine modification. Positions 924 to 938 (IIRSKTFSPGPQSQY) are enriched in polar residues. Position 927 is a phosphoserine (Ser927). Thr929 carries the phosphothreonine modification. Ser931 is subject to Phosphoserine; by CDK1. Ser947 bears the Phosphoserine mark. 2 interaction with PRKCZ regions span residues 953 to 996 (SKKP…LDLQ) and 956 to 975 (PPFVRNSLERRSVRMKRPSS). Phosphoserine; by PKC/PRKCZ is present on residues Ser975 and Ser978. Positions 1001–1032 (WHSQLTQEISVLKELKEQLEQAKSHGEKELPQ) form a coiled coil. The ADDV motif signature appears at 1111–1113 (DDV).

This sequence belongs to the WWC family. KIBRA subfamily. As to quaternary structure, homodimer. Forms heterodimers with WWC2 and WWC3. Interacts with DDN. Interacts with DYNLL1 and histone H3. The interaction with DYNLL1 is mandatory for the recruitment and transactivation functions of ESR1 or DYNLL1 to the target chromatin and the interaction with histone H3 ensures proper regulatory interaction of WWC1-DYNLL1-ESR1 complexes with target chromatin. Interacts (via WW domains) with DDR1 (via PPxY motif) in a collagen-regulated manner. Interacts with PRKCZ (via the protein kinase domain). Forms a tripartite complex with DDR1 and PRKCZ, but predominantly in the absence of collagen. Interacts (via the ADDV motif) with PATJ (via PDZ domain 8). Interacts (via WW domains) with SYNPO (via PPxY motifs). Interacts with NF2 and SNX4. Interacts with DLC1 and PRKCZ. Interacts (via WW domains) with LATS1 and LATS2. In terms of processing, phosphorylation at Ser-542 and Ser-931 by CDK1 in response to spindle damage stress regulates mitotic exit, these two sites are dephosphorylated by CDC14B. Expressed in mammary epithelial cells and breast cancer cell lines. Found in the luminal epithelium surrounding the ducts in the normal breast. In the brain, expressed in somatodendritic compartment of neurons in the cortex and hippocampus and in the cerebellum it is found in the Purkinje cells and some granule cells (at protein level). Detected in brain, heart, colon and kidney. In the kidney, expressed in glomerular podocytes, in some tubules and in the collecting duct.

It is found in the cytoplasm. The protein localises to the perinuclear region. It localises to the nucleus. The protein resides in the cell projection. Its subcellular location is the ruffle membrane. It is found in the cytosol. Regulator of the Hippo signaling pathway, also known as the Salvador-Warts-Hippo (SWH) pathway. Enhances phosphorylation of LATS1 and YAP1 and negatively regulates cell proliferation and organ growth due to a suppression of the transcriptional activity of YAP1, the major effector of the Hippo pathway. Along with NF2 can synergistically induce the phosphorylation of LATS1 and LATS2 and function in the regulation of Hippo signaling pathway. Acts as a transcriptional coactivator of ESR1 which plays an essential role in DYNLL1-mediated ESR1 transactivation. Regulates collagen-stimulated activation of the ERK/MAPK cascade. Modulates directional migration of podocytes. Plays a role in cognition and memory performance. Plays an important role in regulating AMPA-selective glutamate receptors (AMPARs) trafficking underlying synaptic plasticity and learning. The chain is Protein KIBRA from Homo sapiens (Human).